The chain runs to 2357 residues: Protein transport protein Sec16A (2357 aa).

Disordered regions lie at residues 1–25 and 57–303; these read MQPP…RSVF and FSRQ…STFR. 2 stretches are compositionally biased toward low complexity: residues 64–76 and 210–227; these read STPL…SSPP and QMPG…PSGQ. The span at 285 to 303 shows a compositional bias: polar residues; the sequence is HLQSGSHLANNSDPESTFR. Phosphoserine is present on residues S296, S314, and S331. Disordered regions lie at residues 335–359, 508–540, 553–603, 758–828, 924–987, 1006–1038, and 1059–1151; these read NPLA…GSGC, APDA…ARPQ, KPED…TGIF, VQPP…NPPV, LLVQ…SSHQ, VNVY…PNLD, and QELV…APGP. The segment covering 520–536 has biased composition (low complexity); that stretch reads SVSSSYSSRSHGRLSGS. Phosphoserine is present on residues S559, S569, S587, S589, and S592. T593 carries the phosphothreonine modification. At S595 the chain carries Phosphoserine. 2 stretches are compositionally biased toward polar residues: residues 766–778 and 803–825; these read SGQQ…SAAP and LQSQ…SLQN. The segment covering 1006–1028 has biased composition (polar residues); it reads VNVYNPSHSDSLASQQSVASHPR. Residues 1019-1890 are required for localization to endoplasmic reticulum exit sites; the sequence is SQQSVASHPR…QQVERQIKEG (872 aa). S1069 is subject to Phosphoserine. Positions 1080-1101 are enriched in polar residues; it reads ELSNPESLPAQGQAQNSAQSPA. The tract at residues 1101–1400 is interaction with MIA3; it reads ASLVLVDAGQ…EAPLPPGSFH (300 aa). The interval 1102-1405 is required for endoplasmic reticulum localization; that stretch reads SLVLVDAGQQ…PGSFHGDFAY (304 aa). Positions 1118–1131 are enriched in low complexity; that stretch reads QSSSVSLVSSGSGQ. Residues 1138-1151 are compositionally biased toward pro residues; that stretch reads QPWPQPVPALAPGP. Residues S1207, S1229, and S1305 each carry the phosphoserine modification. The tract at residues 1215–1248 is disordered; sequence YPEPERPSSRASHSSERPPPRQGYPEGYYSSKSG. The span at 1216–1233 shows a compositional bias: basic and acidic residues; it reads PEPERPSSRASHSSERPP. Over residues 1307–1322 the composition is skewed to basic and acidic residues; sequence FGDRPEKRDNNWRYDP. The segment at 1307-1378 is disordered; it reads FGDRPEKRDN…SLSSHSHQSQ (72 aa). T1325 bears the Phosphothreonine mark. Residues S1327, S1347, S1350, S1356, S1359, S1362, S1369, S1573, and S1601 each carry the phosphoserine modification. The segment covering 1333-1354 has biased composition (basic and acidic residues); the sequence is DPHRDPYGEEVDRRSVHSEHSA. Residues 1356-1375 are compositionally biased toward low complexity; the sequence is SLHSAHSLASRRSSLSSHSH. The tract at residues 1434–1890 is central conserved domain (CCD); mediates interaction with RNF183, LRRK2 and SEC13; that stretch reads QVSSRPTSPE…QQVERQIKEG (457 aa). T1907 carries the phosphothreonine modification. 4 positions are modified to phosphoserine: S1939, S1964, S2022, and S2042. 3 disordered regions span residues 2049-2110, 2141-2181, and 2226-2328; these read KFAN…SWFF, VNLN…PVNM, and NLFV…MPFY. Position 2054 is a phosphothreonine (T2054). A phosphoserine mark is found at S2056, S2073, and S2083. The span at 2087-2106 shows a compositional bias: basic and acidic residues; that stretch reads ETKRPGQAAKKETKEPKKGE. The interval 2106 to 2357 is required for interaction with SEC23A; the sequence is ESWFFRWLPG…IGQRKHLVLN (252 aa). Phosphoserine occurs at positions 2271 and 2291. 2 stretches are compositionally biased toward low complexity: residues 2289-2302 and 2310-2324; these read ELSR…LSRE and APGD…PSGA.

Belongs to the SEC16 family. SEC16A and SEC16B are each present in multiple copies in a heteromeric complex. Interacts with SEC23A. Interacts with RNF183 and RNF152. Interacts with LRRK2 (via ROC domain). Interacts with SEC13. Interacts with RAB10. Interacts with MIA3. Interacts with GORASP2 in response to ER stress. In terms of tissue distribution, ubiquitous. Expressed at higher levels in the pancreas.

Its subcellular location is the endoplasmic reticulum membrane. The protein resides in the golgi apparatus membrane. It localises to the cytoplasm. It is found in the perinuclear region. The protein localises to the cytosol. Its subcellular location is the microsome membrane. Functionally, acts as a molecular scaffold that plays a key role in the organization of the endoplasmic reticulum exit sites (ERES), also known as transitional endoplasmic reticulum (tER). SAR1A-GTP-dependent assembly of SEC16A on the ER membrane forms an organized scaffold defining an ERES. Required for secretory cargo traffic from the endoplasmic reticulum to the Golgi apparatus. Mediates the recruitment of MIA3/TANGO to ERES. Regulates both conventional (ER/Golgi-dependent) and GORASP2-mediated unconventional (ER/Golgi-independent) trafficking of CFTR to cell membrane. Positively regulates the protein stability of E3 ubiquitin-protein ligases RNF152 and RNF183 and the ER localization of RNF183. Acts as a RAB10 effector in the regulation of insulin-induced SLC2A4/GLUT4 glucose transporter-enriched vesicles delivery to the cell membrane in adipocytes. In Homo sapiens (Human), this protein is Protein transport protein Sec16A (SEC16A).